The following is a 298-amino-acid chain: Rhodopsin (298 aa).

Over 1–15 (IHLHWYEYPPMNPMM) the chain is Extracellular. Residues 16–40 (YPLLLIFMLFTGILCLAGNFVTIWV) form a helical membrane-spanning segment. The Cytoplasmic portion of the chain corresponds to 41 to 52 (FMNTKSLRTPAN). The helical transmembrane segment at 53 to 75 (LLVVNLAMSDFLMMFTMFPPMMV) threads the bilayer. Over 76 to 89 (TCYYHTWTLGPTFC) the chain is Extracellular. Cysteines 89 and 166 form a disulfide. A helical transmembrane segment spans residues 90 to 112 (QVYAFLGNLCGCASIWTMVFITF). Residues 113 to 115 (DRY) carry the 'Ionic lock' involved in activated form stabilization motif. The Cytoplasmic portion of the chain corresponds to 113–131 (DRYNVIVKGVAGEPLSTKK). A helical membrane pass occupies residues 132–152 (ASLWILTIWVLSTTWCMAPFF). Residues 153–179 (GWNHYVPEGNLTGCGTDYLSEDILSRS) lie on the Extracellular side of the membrane. N-linked (GlcNAc...) asparagine glycosylation is present at Asn162. Residues 180-201 (YLYVYSTWVYFLPLAITIYCYV) form a helical membrane-spanning segment. Residues 202-242 (FIIKAVAAHEKGMRDQAKKMGIKSLRNEEAQKTSAECRLAK) are Cytoplasmic-facing. The chain crosses the membrane as a helical span at residues 243-264 (IAMTTVALWFIAWTPYLLINWV). The Extracellular segment spans residues 265 to 275 (GMFARSYLSPV). The helical transmembrane segment at 276-297 (YTIWGYVFAKANAVYNPIVYAI) threads the bilayer. Lys285 is modified (N6-(retinylidene)lysine).

The protein belongs to the G-protein coupled receptor 1 family. Opsin subfamily. As to quaternary structure, homodimer. Interacts with GNAQ. Contains one covalently linked retinal chromophore.

Its subcellular location is the cell projection. The protein resides in the rhabdomere membrane. Its function is as follows. Photoreceptor required for image-forming vision at low light intensity. Can use both retinal and 3-dehydroretinal as visual pigment. Light-induced isomerization of 11-cis to all-trans retinal triggers a conformational change that activates signaling via G-proteins. Signaling via GNAQ probably mediates the activation of phospholipase C. The polypeptide is Rhodopsin (RHO) (Procambarus orcinus (Crayfish)).